The primary structure comprises 544 residues: Sphingosine-1-phosphate lyase (544 aa).

At 1–29 the chain is on the lumenal side; the sequence is MDSFSYSSMKSMLIQARGSLNSRLSEFEP. The helical; Signal-anchor for type III membrane protein transmembrane segment at 30–50 threads the bilayer; that stretch reads LVLLLVPLVSLFLAQIIGSVF. Over 51 to 544 the chain is Cytoplasmic; sequence GVVHEKGLKA…LLVSFMDSQY (494 aa). Lysine 349 is modified (N6-(pyridoxal phosphate)lysine).

It belongs to the group II decarboxylase family. Sphingosine-1-phosphate lyase subfamily. Pyridoxal 5'-phosphate serves as cofactor. In terms of tissue distribution, expressed in the peripheral parts of leaves and the bases of trichomes.

It localises to the endoplasmic reticulum membrane. The catalysed reaction is sphinganine 1-phosphate = hexadecanal + phosphoethanolamine. It participates in lipid metabolism; sphingolipid metabolism. In terms of biological role, cleaves phosphorylated sphingoid bases (PSBs), such as sphingosine-1-phosphate, into fatty aldehydes and phosphoethanolamine. May play a minor role in maintenance of sphingolipid metabolism during normal plant development and growth, but be required for maintaining sphingoid long chain bases (LCB) and their phosphorylated derivatives (LCB-P) levels when sphingolipid metabolism is perturbed. May play a role in dehydration stress. The protein is Sphingosine-1-phosphate lyase (DPL1) of Arabidopsis thaliana (Mouse-ear cress).